Consider the following 23-residue polypeptide: Conotoxin Cl6c (23 aa).

3 disulfides stabilise this stretch: Cys2-Cys12, Cys5-Cys17, and Cys11-Cys21.

In terms of tissue distribution, expressed by the venom duct.

It localises to the secreted. This Californiconus californicus (California cone) protein is Conotoxin Cl6c.